The primary structure comprises 418 residues: MGKIVIEPLSRLEGHGKVTITLDENGKPKDVKLHITALRGFEQFVVGRPAEEVPRIVPRICGICQTAHHLASVKAIDAAWGVEIPEPAKKLRELMHIGNMIHSHALHFYFLAAPDFVLGPDADPAIRNIVGVIDKAPDVAKQAIALRKFGQKIVEAVGGKAIHPVTGIPGGQAKRLTEEERDELLKDADQMIEYAKNGVELIKQLNEQYMEQIKTLGVIDTYYLGLVKDGKHNFYDDTLRFLSPDGKEKVEFKPEEYLNYIGEYVVPYNYVKHPYYKKVGYPEGVYRVGPLAMLNVCDEMETPLAEEYRKEFLEIFGFPANQSLAYNHARLIELVEACEKAKILLEDNDITSDDIKADVEPKAGNGVGVVYAPRGVLIHNYETDENGIVVKANMIVATTHNVPTMEKAIQQAAQVIFK.

Residues Cys61 and Cys64 each coordinate Ni(2+).

Belongs to the [NiFe]/[NiFeSe] hydrogenase large subunit family. The F420-non-reducing hydrogenase vhu is composed of four subunits; VhuA, VhuD, VhuG and VhuU. It depends on Ni(2+) as a cofactor.

This chain is F420-non-reducing hydrogenase vhu subunit A (vhuA), found in Methanocaldococcus jannaschii (strain ATCC 43067 / DSM 2661 / JAL-1 / JCM 10045 / NBRC 100440) (Methanococcus jannaschii).